Reading from the N-terminus, the 492-residue chain is MFSKLTPLAETGIPTLSCANAAGRLLHSDSRQIKQGDIFVACPGEYADGRSYIPAAVANGAAFVFWDDDGKFAWNPEWKVPNQGIKDLKHRAGILAAQVYGNVSDGLKFWGVTGTNGKTSITQWLAQAADLLGEKTAIVGTVGNGFWGALEETTHTTPAPVDVQTLLYRFRQQGATVAAMEVSSHGLDQSRVNGVSFRSAIFTNLTRDHLDYHGTMEAYGAIKSRLFYWHGLKHAVINVDDEYGAELAGRLKKDCPDLAVYSYGFSEQADIRIIDFTASSDGIAAVFQTPWGEGKCRTRLLGRFNAQNLAACIALLCANGYPLDNVLDVLAKIRPASGRMDCIMNSGKPLVVVDYAHTPDALEKALATLQEIKPQGAALWCVFGCGGNRDRGKRPLMGAAAVQGADKVVVTSDNPRLENPHDIINDILPAVPAPECVEADRAAAIRYAVEQAAANDIILIAGKGHENYQDVQGVKHRFSDLEIVGQALLTRK.

Serine 30 contacts UDP-N-acetyl-alpha-D-muramoyl-L-alanyl-D-glutamate. 114-120 is an ATP binding site; sequence GTNGKTS. Residues 156–157, serine 183, glutamine 189, and arginine 191 contribute to the UDP-N-acetyl-alpha-D-muramoyl-L-alanyl-D-glutamate site; that span reads TT. Residue lysine 223 is modified to N6-carboxylysine. Meso-2,6-diaminopimelate contacts are provided by residues arginine 389, 413–416, glycine 462, and glutamate 466; that span reads DNPR. The Meso-diaminopimelate recognition motif motif lies at 413–416; it reads DNPR.

The protein belongs to the MurCDEF family. MurE subfamily. It depends on Mg(2+) as a cofactor. Carboxylation is probably crucial for Mg(2+) binding and, consequently, for the gamma-phosphate positioning of ATP.

The protein localises to the cytoplasm. The catalysed reaction is UDP-N-acetyl-alpha-D-muramoyl-L-alanyl-D-glutamate + meso-2,6-diaminopimelate + ATP = UDP-N-acetyl-alpha-D-muramoyl-L-alanyl-gamma-D-glutamyl-meso-2,6-diaminopimelate + ADP + phosphate + H(+). The protein operates within cell wall biogenesis; peptidoglycan biosynthesis. Functionally, catalyzes the addition of meso-diaminopimelic acid to the nucleotide precursor UDP-N-acetylmuramoyl-L-alanyl-D-glutamate (UMAG) in the biosynthesis of bacterial cell-wall peptidoglycan. The sequence is that of UDP-N-acetylmuramoyl-L-alanyl-D-glutamate--2,6-diaminopimelate ligase from Neisseria meningitidis serogroup A / serotype 4A (strain DSM 15465 / Z2491).